The sequence spans 442 residues: Glutamyl-tRNA(Gln) amidotransferase subunit D (442 aa).

Positions 63 to 84 (TQTDIGSSAGAGADTEADKTES) are disordered. One can recognise an Asparaginase/glutaminase domain in the interval 102-429 (PTVSLISTGG…PDPTNAMRKS (328 aa)). Catalysis depends on residues Thr-112, Thr-188, Asp-189, and Lys-265.

The protein belongs to the asparaginase 1 family. GatD subfamily. As to quaternary structure, heterodimer of GatD and GatE.

It carries out the reaction L-glutamyl-tRNA(Gln) + L-glutamine + ATP + H2O = L-glutaminyl-tRNA(Gln) + L-glutamate + ADP + phosphate + H(+). Its function is as follows. Allows the formation of correctly charged Gln-tRNA(Gln) through the transamidation of misacylated Glu-tRNA(Gln) in organisms which lack glutaminyl-tRNA synthetase. The reaction takes place in the presence of glutamine and ATP through an activated gamma-phospho-Glu-tRNA(Gln). The GatDE system is specific for glutamate and does not act on aspartate. The sequence is that of Glutamyl-tRNA(Gln) amidotransferase subunit D from Haloquadratum walsbyi (strain DSM 16790 / HBSQ001).